Here is a 3073-residue protein sequence, read N- to C-terminus: MRKHILHQRLCGLILVSSFIFLTDSLSLKGKRLDFYGEGKAYVSLTYTMPELSRLTACIDLISMTNSSHYWMAFIYITNNTLLGREDVDLGLAGDHQQLILYSFGKTFYVSYHLIPFHWHTLCLVWDGVKGRLELFRNKERILAIMDQPHRLSPNGTLVLGHFPRNGEGQIKTVIPRFTSSLYYFQLWDRILENEEFMTCFYGNVVSWEDDVWLIHKISPTVDRRLRCFVSENMTIQETSTNVSQQIDLTTSSQTTGLNPHKTSHSSTLLPEGMADSTINSTAISYANTVPSPLATVSAAKDLKTSTTETATFLTDTLFTSTATPLPTQTVTEHSYLGKTRTSKRVEAMATEIFHSATATDLIDTSVFTKNYTVSETSTTKSKSAVGKTTLFLNESTSIAPTPCPKHKSTDVAILHTSKSGQEFLVSSAARTVSWSTLEETSPITTDVGIVSTFPPESLLTSTASPVSSTFPEIQLASTLSTTDSEMASTVHSVLPMQTIPTPRTVKPESGSTNFQDVFSPSMEDALSVSMPKETTFMAFSSITSSPITRTQDEQIAIDAESTHLTIIPGTKFVPTLAEASLFPTIEGQAYTQDTPTTDEPMLTLTSTKSPSTYNASESVLTSITIKSDYQFFTNETTWTSKSGQNLLTSMNTTTIPTFTSNKTLTLPFQGNATNRDHSSMTTNVSPIEASTESKVTTSSDATTASYTTALFKPTSQWLSHFTSVSGITSIASQPESKLTTLLLKSNSMPTVATNEFPSIPSEPVAPSVNTSTLTDIKPNFSTEKSISETIQIETNGVSSFGDTLAPLPMSATTQRVYTTVTKETTSRHPKVKSTISTVAEASPFSTMLEVTDESEQMVTASVTISPFTDIEKLTTALSKETATAEVGVSWLSTKLKESMPESSHNGTTESFNSTHTYTVDWTSEKSKGNSASSPNSASTQALPELPSSSTMKTMGVTFSTNSSQRTAASLSAGILSPQTASTHALVTPQLLTHTFSLPVNISAVTSPKTTMVFFDETKVTLSQPSTLARDFTTSMPSVGSTLPTVTMTTELVPPVSPTASTISDSMFTHRDLLHTTSEVTTISSTTAHMAISSLRETLVSSLRPPTPVITKAISTIPSISSDSVSPSIHTLVCSRPSPNNVTIVSSTYVSSTTSTSVATPSESHFSFPYAFSSGGDVTMASGPTGTSAGGEAMPPNTFVNKFITSVDHESTTYFVNTPVSTQSVFATSMVSSDKEQTNISMEKTLRTTGVAEISPSKNSFILDSQSTFPWEMTDTELSETTEISSHQTHLPSEILPGYSDSGNLTTFSTSGSTQSAQTLSSSTIIGVRVSEGSTSLEKTALPSQVQTVTKSLTHDKERTSALSEYPPRTVEKIMSSSPVTHQATGHLATSIVDASRTTRISHPVLINTTLSYLLSLKTKPEATQIASSTSGSTENFPNSFSPFTTGLLSTNFTMITPNGSTTVLSIPNEPTNLPKKTSMEASTPISQMDLLALNVTAFTSKKVSDTHTMLMTKSSRTIHIGTLKSVSIGTFGLKSEKSEMPVNNSDFSTTVLYSDTSTRLGEFFTSSSSLPPKATKTTQASTLNTTPVAHAGPTSQRTVFSSTFSNSSVVEVPLNYTTAHFSSPTQRGFLSMKTIPTTSMAGISTSVIGATSSSLSSSKNTEPISSIPKTMFSLLLSTTQQPSQENGAPTLDILPGITVSSGGATDLINANSRATIPANELSTTPSDNFYTFLNTQDSPTLTNSKVTPRPTESVKSTPTHLSFDTRKMNILTELTKSGPCVTTPVLYPLWTQTSTAPPLTSHLYSPHSTKAKFPLASQMAEYPAWATGITPSITQALLTTSRNTQRVEDSPFPVFTTKVMTPNRMEVETLHSPSGTLATSTTSQIGLVSRDVTVMPLISTSESLPSLGISESTSLSISSTFPPTTLAAILPTFEKTAMPVTPGITLSSNPSVNSRATSPTWSSSSLPSDSRASIFTPSRLLTSSSGEMSESTFPASDIIATYSNFTVAPLSDGSATIATQATSTTTLDIITANSLTSPPIPSKDKDGSLHTSTFLESSLRTTGADSSTDMSERMSFGRTSISPSLTRHDLSIGSLTVSSPTNTSPWSKVPVTSESHTLFPSKSTLDSVMSTATTTSTAIGTSFPLMSTEMAHPSTATGFSLVSSSFETTWMDSIFSSLFTQPSTSPTAKESTVSFYNIKMSFSVFDEEPRVLVTTVIHDLTKDWLNFMFQNSEFSLANLAIQIKSRKTSKEETAMYRYILEQKKGQGMDAIFHVPYSCACWVIIKAKSSLESVELISSIRTKIHGNLTHGNFTQDQLTLLVKSDHVVVEKLEPGKCEADETPSKYKGTYKWPLTDPTETAQERCIKNENRNATRICSISIQTGKCQWEKPRLKQCKLLQGLPDKIVDLANITISDENADDVAEHILNLVNESPPLDEEETKIIVSKVADISNCDEISINLTQIILQILNTVTEKQSDSASNLPPVSNEILRIIERVGHKMEFAGRTANLTVAKLALAVLRVDHKFEGMAFSIQSSEEVIAPQIFLGDIPLRKALASIYLPKSLREKVPLDGLQTILFNFFGQTSLFKAKTITSELMTYVVSASISNTSIQNLADPVIIILKHIQGDWNYDQVYCAFWDFDTNNGLGGWNPSGCKLKESNINYTICQCNHLTHFGVLMDLSRSTVDAVNERILVIITYTGCGISSIFLGIAMVTYIAFHKLRKDYPSKILINLCTALLMLNLAFLVNSWLTSFQKVGLCITAAVALHYFLLVSLTWMGLEAVHMYFALVKVFNTYIPNYILKFCLAGWGIPAITVAIILSVRKDLYGTLSPTTPFCWIKDDHIFYISVVAYFCLIFLMNLSMFCTVLVQLTSVKSQSQKTRKKMILNDLKGTISLTFLLGLTWGFAFFAWGPVRIFFLYLFAICNTLQGFLIFVFYCVMKESVREQWHMPLHCRWLRLENFAGWINVRHKQKRLKKNNESKLLTPSLMSTTTFKSIGSVPSIPSEINFSNGDFDDSPDTFSFLSCKAAPTFIRRALPAEIQTNSTQKQRSFPINVSRDTHLTPSSGLGEMFNL.

Positions 1 to 25 (MRKHILHQRLCGLILVSSFIFLTDS) are cleaved as a signal peptide. Over 26 to 2691 (LSLKGKRLDF…RSTVDAVNER (2666 aa)) the chain is Extracellular. Residues 29–228 (KGKRLDFYGE…SPTVDRRLRC (200 aa)) enclose the Pentraxin (PTX) domain. 2 disulfides stabilise this stretch: Cys58–Cys123 and Cys200–Cys228. N-linked (GlcNAc...) asparagine glycosylation occurs at Asn233. The interval 253-272 (SQTTGLNPHKTSHSSTLLPE) is disordered. N-linked (GlcNAc...) asparagine glycosylation occurs at Asn662. 2 stretches are compositionally biased toward polar residues: residues 671–696 (GNAT…ESKV) and 929–951 (GNSA…SSST). Disordered stretches follow at residues 671–697 (GNAT…SKVT) and 924–951 (SEKS…SSST). 3 N-linked (GlcNAc...) asparagine glycosylation sites follow: Asn1141, Asn1304, and Asn1495. 3 disordered regions span residues 1565-1595 (FTSS…AGPT), 1741-1760 (TLTN…STPT), and 1945-1972 (ITLS…SDSR). The span at 1945–1954 (ITLSSNPSVN) shows a compositional bias: polar residues. The span at 1955–1972 (SRATSPTWSSSSLPSDSR) shows a compositional bias: low complexity. A GAIN-B domain is found at 2535–2684 (SSEEVIAPQI…GVLMDLSRST (150 aa)). Cystine bridges form between Cys2635/Cys2666 and Cys2654/Cys2668. The GPS stretch occupies residues 2635–2684 (CAFWDFDTNNGLGGWNPSGCKLKESNINYTICQCNHLTHFGVLMDLSRST). A stachel region spans residues 2673-2684 (HFGVLMDLSRST). Residues 2692–2712 (ILVIITYTGCGISSIFLGIAM) traverse the membrane as a helical segment. The Cytoplasmic segment spans residues 2713-2728 (VTYIAFHKLRKDYPSK). Residues 2729–2749 (ILINLCTALLMLNLAFLVNSW) traverse the membrane as a helical segment. Residues 2750–2755 (LTSFQK) lie on the Extracellular side of the membrane. A helical transmembrane segment spans residues 2756 to 2776 (VGLCITAAVALHYFLLVSLTW). Cys2759 and Cys2836 form a disulfide bridge. Residues 2777 to 2798 (MGLEAVHMYFALVKVFNTYIPN) are Cytoplasmic-facing. The chain crosses the membrane as a helical span at residues 2799–2819 (YILKFCLAGWGIPAITVAIIL). Topologically, residues 2820–2842 (SVRKDLYGTLSPTTPFCWIKDDH) are extracellular. Residues 2843–2863 (IFYISVVAYFCLIFLMNLSMF) traverse the membrane as a helical segment. The Cytoplasmic portion of the chain corresponds to 2864–2892 (CTVLVQLTSVKSQSQKTRKKMILNDLKGT). The chain crosses the membrane as a helical span at residues 2893–2913 (ISLTFLLGLTWGFAFFAWGPV). Residue Arg2914 is a topological domain, extracellular. A helical membrane pass occupies residues 2915 to 2935 (IFFLYLFAICNTLQGFLIFVF). Residues 2936–3073 (YCVMKESVRE…SSGLGEMFNL (138 aa)) lie on the Cytoplasmic side of the membrane.

This sequence belongs to the G-protein coupled receptor 2 family. Adhesion G-protein coupled receptor (ADGR) subfamily. Homodimer; homodimerizes via its Pentraxin domain in a calcium-independent manner. Heterodimer of 2 chains generated by proteolytic processing; the large extracellular N-terminal fragment and the membrane-bound C-terminal fragment predominantly remain associated and non-covalently linked. Autoproteolytically processed at the GPS region of the GAIN-B domain; this cleavage modulates receptor activity.

It localises to the membrane. Forms a heterodimer of 2 chains generated by proteolytic processing that remain associated through non-covalent interactions mediated by the GAIN-B domain. In the inactivated receptor, the Stachel sequence (also named stalk) is embedded in the GAIN-B domain, where it adopts a beta-strand conformation. On activation, the Stachel moves into the 7 transmembrane region and adopts a twisted hook-shaped configuration that forms contacts within the receptor, leading to coupling of a G-alpha protein, which activates signaling. The cleaved GAIN-B and N-terminal domains can then dissociate from the rest of the receptor. In terms of biological role, orphan adhesion G-protein coupled receptor (aGPCR). Ligand binding causes a conformation change that triggers signaling via guanine nucleotide-binding proteins (G proteins) and modulates the activity of downstream effectors, such as adenylate cyclase. ADGRG4 is coupled to G(s) G proteins and mediates activation of adenylate cyclase activity. May be act as sensor of mechanical forces. This is Adhesion G-protein coupled receptor G4 from Mus musculus (Mouse).